The primary structure comprises 167 residues: NAD(P)H-quinone oxidoreductase subunit I, chloroplastic (167 aa).

4Fe-4S ferredoxin-type domains lie at 55-84 and 95-124; these read GRIHFEFDKCIACEVCVRVCPIDLPVVDWK and LNYSIDFGICIFCGNCVEYCPTNCLSMTEE. [4Fe-4S] cluster contacts are provided by cysteine 64, cysteine 67, cysteine 70, cysteine 74, cysteine 104, cysteine 107, cysteine 110, and cysteine 114.

It belongs to the complex I 23 kDa subunit family. NDH is composed of at least 16 different subunits, 5 of which are encoded in the nucleus. [4Fe-4S] cluster serves as cofactor.

It is found in the plastid. The protein resides in the chloroplast thylakoid membrane. The catalysed reaction is a plastoquinone + NADH + (n+1) H(+)(in) = a plastoquinol + NAD(+) + n H(+)(out). It carries out the reaction a plastoquinone + NADPH + (n+1) H(+)(in) = a plastoquinol + NADP(+) + n H(+)(out). Functionally, NDH shuttles electrons from NAD(P)H:plastoquinone, via FMN and iron-sulfur (Fe-S) centers, to quinones in the photosynthetic chain and possibly in a chloroplast respiratory chain. The immediate electron acceptor for the enzyme in this species is believed to be plastoquinone. Couples the redox reaction to proton translocation, and thus conserves the redox energy in a proton gradient. This is NAD(P)H-quinone oxidoreductase subunit I, chloroplastic from Arabis hirsuta (Hairy rock-cress).